The following is a 219-amino-acid chain: Ribose-5-phosphate isomerase A (219 aa).

Residues 28–31, 81–84, and 94–97 each bind substrate; these read SGST, DGAD, and KGGG. The Proton acceptor role is filled by Glu-103. Lys-121 contacts substrate.

This sequence belongs to the ribose 5-phosphate isomerase family. In terms of assembly, homodimer.

The catalysed reaction is aldehydo-D-ribose 5-phosphate = D-ribulose 5-phosphate. It functions in the pathway carbohydrate degradation; pentose phosphate pathway; D-ribose 5-phosphate from D-ribulose 5-phosphate (non-oxidative stage): step 1/1. Functionally, catalyzes the reversible conversion of ribose-5-phosphate to ribulose 5-phosphate. The chain is Ribose-5-phosphate isomerase A from Glaesserella parasuis serovar 5 (strain SH0165) (Haemophilus parasuis).